The primary structure comprises 394 residues: Elongation factor Tu (394 aa).

Residues 10 to 204 (KPHVNIGTIG…AVDSYIPQPV (195 aa)) enclose the tr-type G domain. Residues 19–26 (GHVDHGKT) form a G1 region. 19 to 26 (GHVDHGKT) contacts GTP. Residue T26 coordinates Mg(2+). A G2 region spans residues 60–64 (GITIS). Residues 81-84 (DCPG) form a G3 region. GTP contacts are provided by residues 81-85 (DCPGH) and 136-139 (NKVD). Residues 136 to 139 (NKVD) are G4. Residues 174 to 176 (SAL) form a G5 region.

Belongs to the TRAFAC class translation factor GTPase superfamily. Classic translation factor GTPase family. EF-Tu/EF-1A subfamily. As to quaternary structure, monomer.

The protein localises to the cytoplasm. It carries out the reaction GTP + H2O = GDP + phosphate + H(+). In terms of biological role, GTP hydrolase that promotes the GTP-dependent binding of aminoacyl-tRNA to the A-site of ribosomes during protein biosynthesis. The sequence is that of Elongation factor Tu from Rickettsia massiliae (strain Mtu5).